The primary structure comprises 241 residues: uncharacterized protein (241 aa).

An HTH cro/C1-type domain is found at 32-86 (LKKWRNLFNIQQIELAKYLNVSPSVISDYEVGRRKNPGVNIIKKYVLALIEIDKE). Positions 43 to 62 (QIELAKYLNVSPSVISDYEV) form a DNA-binding region, H-T-H motif.

This is an uncharacterized protein from Methanocaldococcus jannaschii (strain ATCC 43067 / DSM 2661 / JAL-1 / JCM 10045 / NBRC 100440) (Methanococcus jannaschii).